The chain runs to 101 residues: Co-chaperonin GroES (101 aa).

Belongs to the GroES chaperonin family. In terms of assembly, heptamer of 7 subunits arranged in a ring. Interacts with the chaperonin GroEL.

The protein localises to the cytoplasm. Its function is as follows. Together with the chaperonin GroEL, plays an essential role in assisting protein folding. The GroEL-GroES system forms a nano-cage that allows encapsulation of the non-native substrate proteins and provides a physical environment optimized to promote and accelerate protein folding. GroES binds to the apical surface of the GroEL ring, thereby capping the opening of the GroEL channel. The protein is Co-chaperonin GroES of Lawsonia intracellularis.